We begin with the raw amino-acid sequence, 625 residues long: Interleukin-1 receptor-associated kinase-like 2 (625 aa).

Residues 13–94 (LDDLCRNMDA…RAAQIILNWK (82 aa)) enclose the Death domain. Residues 111–181 (KPEKPLAASV…SSDSKDFSTS (71 aa)) form a disordered region. Ser-144 is subject to Phosphoserine. Residues 169 to 181 (LPTSSDSKDFSTS) are compositionally biased toward polar residues. In terms of domain architecture, Protein kinase spans 210-489 (FNQNRKISQG…LCLRRRNTSL (280 aa)). ATP contacts are provided by residues 216–224 (ISQGTFADV), Lys-237, and 337–340 (KSSN). The segment at 510–540 (LPWSGLSEGTGSSSNTPEETDDVDNSSLDAS) is disordered. The segment covering 516–526 (SEGTGSSSNTP) has biased composition (polar residues).

Belongs to the protein kinase superfamily. TKL Ser/Thr protein kinase family. Pelle subfamily. In terms of assembly, interacts with MYD88. IL-1 stimulation leads to the formation of a signaling complex which dissociates from the IL-1 receptor following the binding of PELI1. Expressed in spleen, thymus, prostate, lung, liver, skeletal muscle, kidney, pancreas and peripheral blood leukocytes.

Functionally, binds to the IL-1 type I receptor following IL-1 engagement, triggering intracellular signaling cascades leading to transcriptional up-regulation and mRNA stabilization. The protein is Interleukin-1 receptor-associated kinase-like 2 (IRAK2) of Homo sapiens (Human).